A 369-amino-acid chain; its full sequence is UDP-N-acetylglucosamine--N-acetylmuramyl-(pentapeptide) pyrophosphoryl-undecaprenol N-acetylglucosamine transferase (369 aa).

UDP-N-acetyl-alpha-D-glucosamine contacts are provided by residues 16-18, Asn-130, Arg-171, Ser-196, and Gln-297; that span reads TGG.

Belongs to the glycosyltransferase 28 family. MurG subfamily.

The protein localises to the cell inner membrane. It carries out the reaction di-trans,octa-cis-undecaprenyl diphospho-N-acetyl-alpha-D-muramoyl-L-alanyl-D-glutamyl-meso-2,6-diaminopimeloyl-D-alanyl-D-alanine + UDP-N-acetyl-alpha-D-glucosamine = di-trans,octa-cis-undecaprenyl diphospho-[N-acetyl-alpha-D-glucosaminyl-(1-&gt;4)]-N-acetyl-alpha-D-muramoyl-L-alanyl-D-glutamyl-meso-2,6-diaminopimeloyl-D-alanyl-D-alanine + UDP + H(+). The protein operates within cell wall biogenesis; peptidoglycan biosynthesis. In terms of biological role, cell wall formation. Catalyzes the transfer of a GlcNAc subunit on undecaprenyl-pyrophosphoryl-MurNAc-pentapeptide (lipid intermediate I) to form undecaprenyl-pyrophosphoryl-MurNAc-(pentapeptide)GlcNAc (lipid intermediate II). This is UDP-N-acetylglucosamine--N-acetylmuramyl-(pentapeptide) pyrophosphoryl-undecaprenol N-acetylglucosamine transferase from Desulfotalea psychrophila (strain LSv54 / DSM 12343).